The following is a 420-amino-acid chain: Phosphoglycerate kinase, cytosolic (420 aa).

Residues V23, D24, F25, N26, R39, S61, H62, G64, R65, R135, H171, and R172 each coordinate (2R)-3-phosphoglycerate. G217 provides a ligand contact to ADP. G217 contacts CDP. K219 serves as a coordination point for (2R)-3-phosphoglycerate. K219 serves as a coordination point for AMP. Position 222 (D222) interacts with CDP. Residue D222 participates in Mg(2+) binding. 2 residues coordinate ADP: K223 and G241. K223 serves as a coordination point for AMP. Residue K223 coordinates ATP. CDP is bound at residue G241. Residues A242 and A314 each contribute to the AMP site. Residues A242 and A314 each coordinate ATP. 2 residues coordinate ADP: A314 and N338. CDP is bound by residues G339 and F344. 4 residues coordinate ADP: F344, E345, D377, and S378. E345 is a binding site for AMP. Positions 345, 377, and 378 each coordinate ATP. D377 contacts Mg(2+).

The protein belongs to the phosphoglycerate kinase family. As to quaternary structure, monomer. The cofactor is Mg(2+).

Its subcellular location is the cytoplasm. It carries out the reaction (2R)-3-phosphoglycerate + ATP = (2R)-3-phospho-glyceroyl phosphate + ADP. It participates in carbohydrate degradation; glycolysis; pyruvate from D-glyceraldehyde 3-phosphate: step 2/5. This chain is Phosphoglycerate kinase, cytosolic (C1PGK), found in Trypanosoma congolense.